A 180-amino-acid chain; its full sequence is Large ribosomal subunit protein uL5 (180 aa).

The protein belongs to the universal ribosomal protein uL5 family. Part of the 50S ribosomal subunit; part of the 5S rRNA/L5/L18/L25 subcomplex. Contacts the 5S rRNA and the P site tRNA. Forms a bridge to the 30S subunit in the 70S ribosome.

In terms of biological role, this is one of the proteins that bind and probably mediate the attachment of the 5S RNA into the large ribosomal subunit, where it forms part of the central protuberance. In the 70S ribosome it contacts protein S13 of the 30S subunit (bridge B1b), connecting the 2 subunits; this bridge is implicated in subunit movement. Contacts the P site tRNA; the 5S rRNA and some of its associated proteins might help stabilize positioning of ribosome-bound tRNAs. This is Large ribosomal subunit protein uL5 from Lactobacillus johnsonii (strain CNCM I-12250 / La1 / NCC 533).